The following is a 158-amino-acid chain: Cyclic pyranopterin monophosphate synthase (158 aa).

Substrate contacts are provided by residues 75-77 and 113-114; these read LCH and ME. Residue Asp128 is part of the active site.

It belongs to the MoaC family. As to quaternary structure, homohexamer; trimer of dimers.

The enzyme catalyses (8S)-3',8-cyclo-7,8-dihydroguanosine 5'-triphosphate = cyclic pyranopterin phosphate + diphosphate. It participates in cofactor biosynthesis; molybdopterin biosynthesis. Functionally, catalyzes the conversion of (8S)-3',8-cyclo-7,8-dihydroguanosine 5'-triphosphate to cyclic pyranopterin monophosphate (cPMP). The polypeptide is Cyclic pyranopterin monophosphate synthase (Vibrio campbellii (strain ATCC BAA-1116)).